We begin with the raw amino-acid sequence, 364 residues long: Tyrosine--tRNA ligase (364 aa).

Position 39 (tyrosine 39) interacts with L-tyrosine. Residues histidine 49 and tryptophan 52 each contribute to the ATP site. Residues tyrosine 165, glutamine 169, aspartate 172, and glutamine 187 each contribute to the L-tyrosine site. Positions 238–242 match the 'KMSKS' region motif; it reads KMSKS. Residue lysine 241 coordinates ATP.

The protein belongs to the class-I aminoacyl-tRNA synthetase family. TyrS type 4 subfamily. As to quaternary structure, homodimer.

It localises to the cytoplasm. The catalysed reaction is tRNA(Tyr) + L-tyrosine + ATP = L-tyrosyl-tRNA(Tyr) + AMP + diphosphate + H(+). Functionally, catalyzes the attachment of tyrosine to tRNA(Tyr) in a two-step reaction: tyrosine is first activated by ATP to form Tyr-AMP and then transferred to the acceptor end of tRNA(Tyr). In Aeropyrum pernix (strain ATCC 700893 / DSM 11879 / JCM 9820 / NBRC 100138 / K1), this protein is Tyrosine--tRNA ligase.